A 443-amino-acid chain; its full sequence is Glutamine synthetase (443 aa).

The 82-residue stretch at 16–97 folds into the GS beta-grasp domain; sequence KRIKFVQLIF…VYGYIYKDGK (82 aa). The GS catalytic domain occupies 103–443; sequence PRGVLRRTLE…EWELERYFFI (341 aa). 2 residues coordinate Mg(2+): glutamate 126 and glutamate 128. Glutamate 176 is an ATP binding site. 2 residues coordinate Mg(2+): glutamate 181 and glutamate 188. Glycine 233 is an L-glutamate binding site. Histidine 237 is a binding site for Mg(2+). Residues 239 to 241 and serine 241 each bind ATP; that span reads HIS. Arginine 287, glutamate 293, and arginine 305 together coordinate L-glutamate. Residues arginine 305 and arginine 310 each coordinate ATP. Glutamate 322 provides a ligand contact to Mg(2+). An L-glutamate-binding site is contributed by arginine 324.

It belongs to the glutamine synthetase family. In terms of assembly, oligomer of 12 subunits arranged in the form of two hexagons. The cofactor is Mg(2+).

It localises to the cytoplasm. The enzyme catalyses L-glutamate + NH4(+) + ATP = L-glutamine + ADP + phosphate + H(+). Its function is as follows. Probably involved in nitrogen metabolism via ammonium assimilation. Catalyzes the ATP-dependent biosynthesis of glutamine from glutamate and ammonia. The polypeptide is Glutamine synthetase (Pyrococcus horikoshii (strain ATCC 700860 / DSM 12428 / JCM 9974 / NBRC 100139 / OT-3)).